Here is a 122-residue protein sequence, read N- to C-terminus: Small ribosomal subunit protein bS6 (122 aa).

The segment at 99-122 is disordered; it reads PSPMMKEVAREEAKKAAAQTEQAA.

This sequence belongs to the bacterial ribosomal protein bS6 family.

In terms of biological role, binds together with bS18 to 16S ribosomal RNA. In Ralstonia pickettii (strain 12J), this protein is Small ribosomal subunit protein bS6.